The chain runs to 367 residues: Multifunctional tryptophan biosynthesis protein (367 aa).

One can recognise a Glutamine amidotransferase type-1 domain in the interval N7–E201. G58–G60 provides a ligand contact to L-glutamine. C86 serves as the catalytic Nucleophile; for GATase activity. L-glutamine is bound by residues Q90 and S136–L137. Catalysis depends on for GATase activity residues H175 and E177. Residues R209 to S367 are indole-3-glycerol phosphate synthase.

In terms of assembly, tetramer of two components I and two components II.

The catalysed reaction is chorismate + L-glutamine = anthranilate + pyruvate + L-glutamate + H(+). It catalyses the reaction 1-(2-carboxyphenylamino)-1-deoxy-D-ribulose 5-phosphate + H(+) = (1S,2R)-1-C-(indol-3-yl)glycerol 3-phosphate + CO2 + H2O. The protein operates within amino-acid biosynthesis; L-tryptophan biosynthesis; L-tryptophan from chorismate: step 1/5. It participates in amino-acid biosynthesis; L-tryptophan biosynthesis; L-tryptophan from chorismate: step 4/5. The protein is Multifunctional tryptophan biosynthesis protein of Pichia angusta (Yeast).